A 352-amino-acid chain; its full sequence is MSAEEQRTTEEVPEWKRQEVAELVDLLETYDSVGVVNVTGIPSKQLQDMRRGLHGQAALRMSRNTLLVRALEEAGDGLDTLTEYVEGEVGLVATNDNPFGLYQQLENSKTPAPINAGEVAPNDIVVPEGDTGIDPGPFVGELQTIGANARIQEGSIQVLDDSVVTEEGETVSDDVSNVLSELGIEPKEVGLDLRGVFSEGVLFTPEELEIDVDEYRADIQSAAASARNLSVNAAYPTERTAPDLIAKGRGEAKSLGLQASVESPDLADDLVSKADAQVRALAAQIDDEDALPEELQDVDAPAAPAGGEADTTADEQSDETQASEADDADDSDDDDDDDDGNAGAEGLGEMFG.

Residues 286-297 (DDEDALPEELQD) show a composition bias toward acidic residues. Residues 286–352 (DDEDALPEEL…GAEGLGEMFG (67 aa)) form a disordered region. A compositionally biased stretch (low complexity) spans 299–310 (DAPAAPAGGEAD). Acidic residues predominate over residues 324–340 (EADDADDSDDDDDDDDG). Residues 343–352 (GAEGLGEMFG) are compositionally biased toward gly residues.

This sequence belongs to the universal ribosomal protein uL10 family. In terms of assembly, part of the 50S ribosomal subunit. Forms part of the ribosomal stalk which helps the ribosome interact with GTP-bound translation factors. Forms a heptameric L10(L12)2(L12)2(L12)2 complex, where L10 forms an elongated spine to which the L12 dimers bind in a sequential fashion.

Forms part of the ribosomal stalk, playing a central role in the interaction of the ribosome with GTP-bound translation factors. The chain is Large ribosomal subunit protein uL10 from Halobacterium salinarum (strain ATCC 700922 / JCM 11081 / NRC-1) (Halobacterium halobium).